The following is a 316-amino-acid chain: Oligopeptide transport system permease protein AppB (316 aa).

6 helical membrane-spanning segments follow: residues 10–30 (LMSIPILLGITILSFVIMKAA), 100–120 (LLLMLVSTILALMISIPFGVL), 138–158 (FIGLAIPNFWFGLILIMVLSV), 177–197 (IFDRIHHLILPAFVLATADMA), 240–260 (LPVITIFGLMIPSFIGGSVVV), and 290–310 (VISAVLVVVGNLIADILYAIV). The ABC transmembrane type-1 domain maps to 96-303 (LPNTLLLMLV…VLVVVGNLIA (208 aa)).

Belongs to the binding-protein-dependent transport system permease family. OppBC subfamily.

The protein localises to the cell membrane. Its function is as follows. This protein is a component of an oligopeptide permease, a binding protein-dependent transport system. This APP system can completely substitute for the OPP system in both sporulation and genetic competence, though, unlike OPP, is incapable of transporting tripeptides. Probably responsible for the translocation of the substrate across the membrane. This chain is Oligopeptide transport system permease protein AppB (appB), found in Bacillus subtilis (strain 168).